The primary structure comprises 229 residues: Platelet-activating factor acetylhydrolase IB subunit alpha2 (229 aa).

Ser2 is subject to N-acetylserine. Position 2 is a phosphoserine (Ser2). Ser48 is an active-site residue. Ser64 is modified (phosphoserine). Catalysis depends on residues Asp193 and His196. Phosphothreonine is present on Thr220.

The protein belongs to the 'GDSL' lipolytic enzyme family. Platelet-activating factor acetylhydrolase IB beta/gamma subunits subfamily. Forms a catalytic dimer which is either homodimer (alpha2/alpha2 homodimer) or heterodimer with PAFAH1B3 (alpha2/alpha1 heterodimer). Component of the cytosolic (PAF-AH (I)) heterotetrameric enzyme, which is composed of PAFAH1B1 (beta), PAFAH1B2 (alpha2) and PAFAH1B3 (alpha1) subunits. The catalytic activity of the enzyme resides in the alpha1 (PAFAH1B3) and alpha2 (PAFAH1B2) subunits, whereas the beta subunit (PAFAH1B1) has regulatory activity. Trimer formation is not essential for the catalytic activity. Interacts (homodimer form) with PAFAH1B1 (homodimer form); PAFAH1B2 competes with NDEL1 for PAFAH1B1 binding. Interacts with VLDLR; this interaction may modulate the Reelin pathway.

It localises to the cytoplasm. The catalysed reaction is a 1-O-alkyl-2-acetyl-sn-glycero-3-phosphocholine + H2O = a 1-O-alkyl-sn-glycero-3-phosphocholine + acetate + H(+). It catalyses the reaction 1-O-hexadecyl-2-acetyl-sn-glycero-3-phosphocholine + H2O = 1-O-hexadecyl-sn-glycero-3-phosphocholine + acetate + H(+). It carries out the reaction 1-O-hexadecyl-2-acetyl-sn-glycero-3-phosphate + H2O = 1-O-hexadecyl-sn-glycero-3-phosphate + acetate + H(+). The enzyme catalyses 1-O-hexadecyl-2-acetyl-sn-glycero-3-phosphoethanolamine + H2O = 1-O-hexadecyl-sn-glycero-3-phosphoethanolamine + acetate + H(+). With respect to regulation, beta subunit (PAFAH1B1) stimulates the acetylhydrolase activity of the alpha2/alpha2 catalytic homodimer. Its function is as follows. Alpha2 catalytic subunit of the cytosolic type I platelet-activating factor (PAF) acetylhydrolase (PAF-AH (I)) heterotetrameric enzyme that catalyzes the hydrolyze of the acetyl group at the sn-2 position of PAF and its analogs and modulates the action of PAF. The activity and substrate specificity of PAF-AH (I) are affected by its subunit composition. The alpha2/alpha2 homodimer (PAFAH1B2/PAFAH1B2 homodimer) hydrolyzes PAF and 1-O-alkyl-2-acetyl-sn-glycero-3-phosphorylethanolamine (AAGPE) more efficiently than 1-O-alkyl-2-acetyl-sn-glycero-3-phosphoric acid (AAGPA). In contrast, the alpha1/alpha2 heterodimer(PAFAH1B3/PAFAH1B3 heterodimer) hydrolyzes AAGPA more efficiently than PAF, but has little hydrolytic activity towards AAGPE. May play a role in male germ cell meiosis during the late pachytenestage and meiotic divisions as well as early spermiogenesis. This chain is Platelet-activating factor acetylhydrolase IB subunit alpha2, found in Mus musculus (Mouse).